A 407-amino-acid chain; its full sequence is Steroid 3-ketoacyl-CoA thiolase FadA6 (407 aa).

Cys110 acts as the Acyl-thioester intermediate in catalysis. CoA-binding positions include Gln178, 237–239 (RES), and Ser262. Active-site proton acceptor residues include His363 and Cys393. Gly395 serves as a coordination point for substrate.

It belongs to the thiolase-like superfamily. Thiolase family.

The enzyme catalyses an acyl-CoA + acetyl-CoA = a 3-oxoacyl-CoA + CoA. It catalyses the reaction 6-methyl-3,7-dioxodecanedioyl-CoA + CoA = 4-methyl-5-oxo-octanedioyl-CoA + acetyl-CoA. The protein operates within steroid metabolism; cholesterol degradation. Functionally, may be involved in the final steps of cholesterol and steroid degradation. Catalyzes the formation of 4-methyl-5-oxo-octanedioyl-CoA (MOODA-CoA) and acetyl-CoA from 6-methyl-3,7-dioxodecanedioyl-CoA (MeDODA-CoA) and coenzyme A. The sequence is that of Steroid 3-ketoacyl-CoA thiolase FadA6 from Mycobacterium tuberculosis (strain ATCC 25618 / H37Rv).